Reading from the N-terminus, the 507-residue chain is ATP synthase subunit beta (507 aa).

The disordered stretch occupies residues 1-22 (MSSLANKAKSKGKSSKSKSNVN). Residue 183–190 (GGAGVGKT) participates in ATP binding.

This sequence belongs to the ATPase alpha/beta chains family. F-type ATPases have 2 components, CF(1) - the catalytic core - and CF(0) - the membrane proton channel. CF(1) has five subunits: alpha(3), beta(3), gamma(1), delta(1), epsilon(1). CF(0) has three main subunits: a(1), b(2) and c(9-12). The alpha and beta chains form an alternating ring which encloses part of the gamma chain. CF(1) is attached to CF(0) by a central stalk formed by the gamma and epsilon chains, while a peripheral stalk is formed by the delta and b chains.

Its subcellular location is the cell inner membrane. The catalysed reaction is ATP + H2O + 4 H(+)(in) = ADP + phosphate + 5 H(+)(out). Produces ATP from ADP in the presence of a proton gradient across the membrane. The catalytic sites are hosted primarily by the beta subunits. The chain is ATP synthase subunit beta from Ehrlichia canis (strain Jake).